We begin with the raw amino-acid sequence, 143 residues long: D-aminoacyl-tRNA deacylase (143 aa).

The Gly-cisPro motif, important for rejection of L-amino acids signature appears at 135-136 (GP).

This sequence belongs to the DTD family. As to quaternary structure, homodimer.

The protein localises to the cytoplasm. The enzyme catalyses glycyl-tRNA(Ala) + H2O = tRNA(Ala) + glycine + H(+). It catalyses the reaction a D-aminoacyl-tRNA + H2O = a tRNA + a D-alpha-amino acid + H(+). An aminoacyl-tRNA editing enzyme that deacylates mischarged D-aminoacyl-tRNAs. Also deacylates mischarged glycyl-tRNA(Ala), protecting cells against glycine mischarging by AlaRS. Acts via tRNA-based rather than protein-based catalysis; rejects L-amino acids rather than detecting D-amino acids in the active site. By recycling D-aminoacyl-tRNA to D-amino acids and free tRNA molecules, this enzyme counteracts the toxicity associated with the formation of D-aminoacyl-tRNA entities in vivo and helps enforce protein L-homochirality. The polypeptide is D-aminoacyl-tRNA deacylase (Mycolicibacterium paratuberculosis (strain ATCC BAA-968 / K-10) (Mycobacterium paratuberculosis)).